We begin with the raw amino-acid sequence, 228 residues long: 2,3-bisphosphoglycerate-dependent phosphoglycerate mutase (228 aa).

Substrate-binding positions include 8-15 (RHGQSEWN), 21-22 (TG), arginine 60, 87-90 (ERHY), lysine 98, 114-115 (RR), and 183-184 (GN). Histidine 9 functions as the Tele-phosphohistidine intermediate in the catalytic mechanism. Residue glutamate 87 is the Proton donor/acceptor of the active site.

The protein belongs to the phosphoglycerate mutase family. BPG-dependent PGAM subfamily.

The catalysed reaction is (2R)-2-phosphoglycerate = (2R)-3-phosphoglycerate. It participates in carbohydrate degradation; glycolysis; pyruvate from D-glyceraldehyde 3-phosphate: step 3/5. Catalyzes the interconversion of 2-phosphoglycerate and 3-phosphoglycerate. This Staphylococcus aureus (strain MRSA252) protein is 2,3-bisphosphoglycerate-dependent phosphoglycerate mutase.